A 578-amino-acid chain; its full sequence is NADPH oxidase 4 (578 aa).

Topologically, residues M1 to H16 are cytoplasmic. A helical transmembrane segment spans residues L17 to Y37. At N38–S62 the chain is on the extracellular side. The 246-residue stretch at R58 to I303 folds into the Ferric oxidoreductase domain. Residues V63 to L83 traverse the membrane as a helical segment. Over R84–L104 the chain is Cytoplasmic. The chain crosses the membrane as a helical span at residues H105 to V125. The Extracellular segment spans residues N126–L154. Residue N133 is glycosylated (N-linked (GlcNAc...) asparagine). A helical membrane pass occupies residues L155–V175. Topologically, residues T176–D188 are cytoplasmic. A helical membrane pass occupies residues I189–S209. The Extracellular portion of the chain corresponds to G210–E424. Residues N218–E273 are E-loop; essential for H2O2 generating catalytic activity. The N-linked (GlcNAc...) asparagine glycan is linked to N230. The tract at residues H248 to E575 is mediates interaction with TLR4. The FAD-binding FR-type domain maps to R304–E419. The helical transmembrane segment at V425–L445 threads the bilayer. Over L446–S578 the chain is Cytoplasmic.

Interacts with, relocalizes and stabilizes CYBA/p22phox. Interacts with TLR4. Interacts with protein disulfide isomerase. Interacts with PPP1R15A. Interacts with LRRC8A; this interaction prevents the ubiquitin-mediated degradation of LRRC8A. It depends on heme as a cofactor. In terms of processing, N-glycosylation is required for the function. As to expression, EXpressed in brain, in all layers of the cerebellum, in pyramidal cells of the Ammon horn and in Purkinje cells (at protein level). Expressed in osteoclasts, leukocytes, kidney, liver and lung.

It is found in the cytoplasm. Its subcellular location is the endoplasmic reticulum membrane. It localises to the cell membrane. The protein localises to the cell junction. The protein resides in the focal adhesion. It is found in the nucleus. The enzyme catalyses NADPH + 2 O2 = 2 superoxide + NADP(+) + H(+). The catalysed reaction is NADPH + O2 + H(+) = H2O2 + NADP(+). With respect to regulation, activated by insulin. Inhibited by diphenylene iodonium. Inhibited by plumbagin. Activated by phorbol 12-myristate 13-acetate (PMA). In terms of biological role, NADPH oxidase that catalyzes predominantly the reduction of oxygen to H2O2. Can also catalyze to a smaller extent, the reduction of oxygen to superoxide. May function as an oxygen sensor regulating the KCNK3/TASK-1 potassium channel and HIF1A activity. May regulate insulin signaling cascade. May play a role in apoptosis, bone resorption and lipolysaccharide-mediated activation of NFKB. May produce superoxide in the nucleus and play a role in regulating gene expression upon cell stimulation. Promotes ferroptosis, reactive oxygen species production and reduced glutathione (GSH) levels by activating NLRP3 inflammasome activation and cytokine release. This is NADPH oxidase 4 (Nox4) from Mus musculus (Mouse).